A 122-amino-acid polypeptide reads, in one-letter code: Protein NIM1-INTERACTING 2 (122 aa).

Positions 1–22 are enriched in basic and acidic residues; the sequence is MNNSLKKEERVEEDNGKSDGNR. The segment at 1–28 is disordered; sequence MNNSLKKEERVEEDNGKSDGNRGKPSTE. Residues 39–45 form an involved in NPR1/NIM1 interaction region; it reads DEFFKIL. A Nuclear localization signal motif is present at residues 70–74; that stretch reads KKRKR.

As to quaternary structure, interacts with NPR1 N-terminal region.

It localises to the nucleus. The chain is Protein NIM1-INTERACTING 2 from Arabidopsis thaliana (Mouse-ear cress).